Reading from the N-terminus, the 154-residue chain is Myoglobin (154 aa).

A Globin domain is found at 2–148 (GLSDGEWQLV…FRNDMAAKYK (147 aa)). Residue Ser-4 is modified to Phosphoserine. His-65 serves as a coordination point for nitrite. His-65 is an O2 binding site. At Thr-68 the chain carries Phosphothreonine. His-94 lines the heme b pocket.

It belongs to the globin family. Monomeric.

It is found in the cytoplasm. The protein resides in the sarcoplasm. The catalysed reaction is Fe(III)-heme b-[protein] + nitric oxide + H2O = Fe(II)-heme b-[protein] + nitrite + 2 H(+). It catalyses the reaction H2O2 + AH2 = A + 2 H2O. In terms of biological role, monomeric heme protein which primary function is to store oxygen and facilitate its diffusion within muscle tissues. Reversibly binds oxygen through a pentacoordinated heme iron and enables its timely and efficient release as needed during periods of heightened demand. Depending on the oxidative conditions of tissues and cells, and in addition to its ability to bind oxygen, it also has a nitrite reductase activity whereby it regulates the production of bioactive nitric oxide. Under stress conditions, like hypoxia and anoxia, it also protects cells against reactive oxygen species thanks to its pseudoperoxidase activity. In Aotus trivirgatus (Three-striped night monkey), this protein is Myoglobin (MB).